Here is a 258-residue protein sequence, read N- to C-terminus: Electron transfer flavoprotein beta subunit lysine methyltransferase (258 aa).

It belongs to the methyltransferase superfamily. ETFBKMT family.

The protein resides in the cytoplasm. It localises to the mitochondrion matrix. The catalysed reaction is L-lysyl-[protein] + 3 S-adenosyl-L-methionine = N(6),N(6),N(6)-trimethyl-L-lysyl-[protein] + 3 S-adenosyl-L-homocysteine + 3 H(+). Its function is as follows. Protein-lysine methyltransferase that selectively trimethylates the flavoprotein ETFB in mitochondria. Thereby, may negatively regulate the function of ETFB in electron transfer from Acyl-CoA dehydrogenases to the main respiratory chain. The protein is Electron transfer flavoprotein beta subunit lysine methyltransferase of Danio rerio (Zebrafish).